The following is a 131-amino-acid chain: D-ribose pyranase (131 aa).

The active-site Proton donor is histidine 20. Substrate contacts are provided by residues aspartate 28, histidine 98, and 120–122 (YSN).

This sequence belongs to the RbsD / FucU family. RbsD subfamily. Homodecamer.

The protein localises to the cytoplasm. It carries out the reaction beta-D-ribopyranose = beta-D-ribofuranose. Its pathway is carbohydrate metabolism; D-ribose degradation; D-ribose 5-phosphate from beta-D-ribopyranose: step 1/2. Functionally, catalyzes the interconversion of beta-pyran and beta-furan forms of D-ribose. The chain is D-ribose pyranase from Lactiplantibacillus plantarum (strain ATCC BAA-793 / NCIMB 8826 / WCFS1) (Lactobacillus plantarum).